A 143-amino-acid chain; its full sequence is ATP synthase epsilon chain (143 aa).

The protein belongs to the ATPase epsilon chain family. In terms of assembly, F-type ATPases have 2 components, CF(1) - the catalytic core - and CF(0) - the membrane proton channel. CF(1) has five subunits: alpha(3), beta(3), gamma(1), delta(1), epsilon(1). CF(0) has three main subunits: a, b and c.

The protein resides in the cell inner membrane. Produces ATP from ADP in the presence of a proton gradient across the membrane. This is ATP synthase epsilon chain from Dichelobacter nodosus (strain VCS1703A).